Reading from the N-terminus, the 223-residue chain is tRNA (guanine-N(7)-)-methyltransferase (223 aa).

S-adenosyl-L-methionine-binding residues include aspartate 56, aspartate 81, aspartate 108, and aspartate 130. Aspartate 130 is a catalytic residue. Positions 134 and 166 each coordinate substrate.

This sequence belongs to the class I-like SAM-binding methyltransferase superfamily. TrmB family.

It catalyses the reaction guanosine(46) in tRNA + S-adenosyl-L-methionine = N(7)-methylguanosine(46) in tRNA + S-adenosyl-L-homocysteine. Its pathway is tRNA modification; N(7)-methylguanine-tRNA biosynthesis. Functionally, catalyzes the formation of N(7)-methylguanine at position 46 (m7G46) in tRNA. This chain is tRNA (guanine-N(7)-)-methyltransferase, found in Rubrobacter xylanophilus (strain DSM 9941 / JCM 11954 / NBRC 16129 / PRD-1).